A 65-amino-acid chain; its full sequence is Photosystem II reaction center protein J (65 aa).

The helical transmembrane segment at 35-55 (LWLVATAGGTAVIFVLGIFFY) threads the bilayer.

This sequence belongs to the PsbJ family. In terms of assembly, PSII is composed of 1 copy each of membrane proteins PsbA, PsbB, PsbC, PsbD, PsbE, PsbF, PsbH, PsbI, PsbJ, PsbK, PsbL, PsbM, PsbT, PsbX, PsbY, Psb30/Ycf12, peripheral proteins PsbO, CyanoQ (PsbQ), PsbU, PsbV and a large number of cofactors. It forms dimeric complexes.

The protein localises to the cellular thylakoid membrane. One of the components of the core complex of photosystem II (PSII). PSII is a light-driven water:plastoquinone oxidoreductase that uses light energy to abstract electrons from H(2)O, generating O(2) and a proton gradient subsequently used for ATP formation. It consists of a core antenna complex that captures photons, and an electron transfer chain that converts photonic excitation into a charge separation. The protein is Photosystem II reaction center protein J of Prochlorococcus marinus (strain NATL1A).